We begin with the raw amino-acid sequence, 334 residues long: Ferrochelatase (334 aa).

2 residues coordinate Fe cation: His207 and Glu288.

It belongs to the ferrochelatase family.

The protein localises to the cytoplasm. It carries out the reaction heme b + 2 H(+) = protoporphyrin IX + Fe(2+). It functions in the pathway porphyrin-containing compound metabolism; protoheme biosynthesis; protoheme from protoporphyrin-IX: step 1/1. Catalyzes the ferrous insertion into protoporphyrin IX. This Helicobacter pylori (strain ATCC 700392 / 26695) (Campylobacter pylori) protein is Ferrochelatase.